A 337-amino-acid polypeptide reads, in one-letter code: Heme A synthase (337 aa).

5 helical membrane-spanning segments follow: residues 6–26 (ITKW…IGGI), 93–113 (GRIT…KDVI), 118–138 (ILPY…GWYM), 154–174 (LAFH…QLIK), and 192–212 (LIFS…GAMV). Residue histidine 256 coordinates heme. Helical transmembrane passes span 258 to 278 (LGGY…LKIE), 285 to 305 (IAYF…ITLL), and 308 to 328 (VPII…SIII). Histidine 316 serves as a coordination point for heme.

Belongs to the COX15/CtaA family. Type 2 subfamily. Interacts with CtaB. The cofactor is heme b.

The protein resides in the cell membrane. It carries out the reaction Fe(II)-heme o + 2 A + H2O = Fe(II)-heme a + 2 AH2. Its pathway is porphyrin-containing compound metabolism; heme A biosynthesis; heme A from heme O: step 1/1. In terms of biological role, catalyzes the conversion of heme O to heme A by two successive hydroxylations of the methyl group at C8. The first hydroxylation forms heme I, the second hydroxylation results in an unstable dihydroxymethyl group, which spontaneously dehydrates, resulting in the formyl group of heme A. In Rickettsia felis (strain ATCC VR-1525 / URRWXCal2) (Rickettsia azadi), this protein is Heme A synthase.